The sequence spans 640 residues: Chaperone protein HtpG (640 aa).

Residues 1 to 352 form an a; substrate-binding region; the sequence is MTEQTATQNY…SADLPLNVSR (352 aa). The interval 353–571 is b; it reads ELLQESRDVK…DGELSPQLIR (219 aa). Positions 572–640 are c; that stretch reads MLKQAGQAVP…VKRINSLLLK (69 aa).

Belongs to the heat shock protein 90 family. As to quaternary structure, homodimer.

It is found in the cytoplasm. Molecular chaperone. Has ATPase activity. This is Chaperone protein HtpG from Acinetobacter baylyi (strain ATCC 33305 / BD413 / ADP1).